The sequence spans 581 residues: MKRARPSEDTFNPVYPYDTETGPPTVPFLTPPFVSPNGFQESPPGVLSLRLSEPLVTSNGMLALKMGNGLSLDEAGNLTSQNVTTVSPPLKKTKSNINLEISAPLTVTSEALTVAAAAPLMVAGNTLTMQSQAPLTVHDSKLSIATQGPLTVSEGKLALQTSGPLTTTDSSTLTITASPPLTTATGSLGIDLKEPIYTQNGKLGLKYGAPLHVTDDLNTLTVATGPGVTINNTSLQTKVTGALGFDSQGNMQLNVAGGLRIDSQNRRLILDVSYPFDAQNQLNLRLGQGPLFINSAHNLDINYNKGLYLFTASNNSKKLEVNLSTAKGLMFDATAIAINAGDGLEFGSPNAPNTNPLKTKIGHGLEFDSNKAMVPKLGTGLSFDSTGAITVGNKNNDKLTLWTTPAPSPNCRLNAEKDAKLTLVLTKCGSQILATVSVLAVKGSLAPISGTVQSAHLIIRFDENGVLLNNSFLDPEYWNFRNGDLTEGTAYTNAVGFMPNLSAYPKSHGKTAKSNIVSQVYLNGDKTKPVTLTITLNGTQETGDTTPSAYSMSFSWDWSGHNYINEIFATSSYTFSYIAQE.

A disordered region spans residues 1–23 (MKRARPSEDTFNPVYPYDTETGP). Positions 1 to 44 (MKRARPSEDTFNPVYPYDTETGPPTVPFLTPPFVSPNGFQESPP) are tail (penton base attachment). Shaft repeat units lie at residues 45 to 59 (GVLS…VTSN), 60 to 75 (GMLA…LDEA), 76 to 95 (GNLT…KTKS), 96 to 109 (NINL…TVTS), 110 to 124 (EALT…MVAG), 125 to 139 (NTLT…TVHD), 140 to 154 (SKLS…TVSE), 155 to 170 (GKLA…TTDS), 171 to 185 (STLT…TTAT), 186 to 200 (GSLG…YTQN), 201 to 217 (GKLG…TDDL), 218 to 232 (NTLT…TINN), 233 to 248 (TSLQ…FDSQ), 249 to 265 (GNMQ…DSQN), 266 to 279 (RRLI…FDAQ), 280 to 296 (NQLN…INSA), 297 to 316 (HNLD…SNNS), 317 to 333 (KKLE…MFDA), 334 to 354 (TAIA…APNT), 355 to 370 (NPLK…FDSN), 371 to 386 (KAMV…FDST), and 387 to 392 (GAITVG). A shaft region region spans residues 45-392 (GVLSLRLSEP…FDSTGAITVG (348 aa)). The spacer stretch occupies residues 393–398 (NKNNDK). Residues 399-581 (LTLWTTPAPS…SYTFSYIAQE (183 aa)) form a head region.

The protein belongs to the adenoviridae fiber family. In terms of assembly, homotrimer; arranged in a triple beta-spiral. Interacts with host receptor CXADR. Interacts (via N-terminal tail region) with pentons. Post-translationally, O-glycosylated; glycans contain N-acetylglucosamine and may play a role in fiber assembly and stabilization.

Its subcellular location is the virion. It is found in the host nucleus. Its function is as follows. Forms spikes that protrude from each vertex of the icosahedral capsid. Interacts with host coxsackievirus and adenovirus receptor CXADR located at the cell tight junctions to provide virion initial attachment to target cell. The fiber protein binds to CXADR with a higher affinity than CXADR binds to itself, thereby blocking the cell-cell adhesion function of CXADR dimers and leading to local disruption of the tight junction. Fiber protein present on neo-synthesized particles may thus disrupt the junctional integrity in order to facilitate further neighboring cells infection. Fiber proteins are shed during virus entry, when virus is still at the cell surface. Fiber shedding is dependent on viral CXADR drifting motion and subsequent binding to immobile integrins. Heparan sulfate might also play a role in virus binding. This Human adenovirus C serotype 5 (HAdV-5) protein is Fiber protein.